A 405-amino-acid chain; its full sequence is Angiopoietin-related protein 4 (405 aa).

An N-terminal signal peptide occupies residues 1-23; sequence MRCAPTAGAALVLCAATAGLLSA. A coiled-coil region spans residues 54-146; that stretch reads GLREHVERTR…QNLQSQIDLL (93 aa). N176 carries N-linked (GlcNAc...) asparagine glycosylation. One can recognise a Fibrinogen C-terminal domain in the interval 178–400; sequence TRLHRPPRDC…ATTLLIQPME (223 aa). C187 and C215 are joined by a disulfide. Residues N231 and N237 are each glycosylated (N-linked (GlcNAc...) asparagine). A disulfide bridge connects residues C340 and C353.

Homooligomer; disulfide-linked via Cys residues in the N-terminal part of the protein. The homooligomer undergoes proteolytic processing to release its carboxyl fibrinogen-like domain, which circulates as a monomer. The homooligomer unprocessed form is able to interact with the extracellular matrix. In terms of processing, N-glycosylated. Forms disulfide-linked dimers and tetramers. Post-translationally, cleaved into a smaller N-terminal chain and a larger chain that contains the fibrinogen C-terminal domain; both cleaved and uncleaved forms are detected in the extracellular space. The cleaved form is not present within the cell.

It localises to the secreted. Its subcellular location is the extracellular space. The protein resides in the extracellular matrix. In terms of biological role, mediates inactivation of the lipoprotein lipase LPL, and thereby plays a role in the regulation of triglyceride clearance from the blood serum and in lipid metabolism. May also play a role in regulating glucose homeostasis and insulin sensitivity. Inhibits proliferation, migration, and tubule formation of endothelial cells and reduces vascular leakage. Upon heterologous expression, inhibits the adhesion of endothelial cell to the extracellular matrix (ECM), and inhibits the reorganization of the actin cytoskeleton, formation of actin stress fibers and focal adhesions in endothelial cells that have adhered to ANGPTL4-containing ECM (in vitro). Depending on context, may modulate tumor-related angiogenesis. Functionally, mediates inactivation of the lipoprotein lipase LPL, and thereby plays an important role in the regulation of triglyceride clearance from the blood serum and in lipid metabolism. Has higher activity in LPL inactivation than the uncleaved protein. The chain is Angiopoietin-related protein 4 (Angptl4) from Rattus norvegicus (Rat).